A 393-amino-acid polypeptide reads, in one-letter code: Putative cytochrome P450 143 (393 aa).

Cys342 provides a ligand contact to heme.

This sequence belongs to the cytochrome P450 family. It depends on heme as a cofactor.

The chain is Putative cytochrome P450 143 (cyp143) from Mycobacterium bovis (strain ATCC BAA-935 / AF2122/97).